Here is a 601-residue protein sequence, read N- to C-terminus: Peptide transporter PTR2 (601 aa).

Over residues 1–10 (MLNHPSQGSD) the composition is skewed to polar residues. Residues 1–66 (MLNHPSQGSD…DEDFEGPTEE (66 aa)) are disordered. The Extracellular portion of the chain corresponds to 1–150 (MLNHPSQGSD…PVFGGYVADT (150 aa)). Basic and acidic residues predominate over residues 14–28 (DEKQGDFPVIEEEKT). Position 37 is a phosphotyrosine (Tyr37). A phosphoserine mark is found at Ser39 and Ser45. Polar residues predominate over residues 42–53 (VANSTERYNLSP). Residues 55–66 (PEDEDFEGPTEE) are compositionally biased toward acidic residues. A helical membrane pass occupies residues 151–172 (FWGKYNTICCGTAIYIAGIFIL). Topologically, residues 173-182 (FITSIPSVGN) are cytoplasmic. A helical transmembrane segment spans residues 183-202 (RDSAIGGFIAAIILIGIATG). Residues 203–210 (MIKANLSV) lie on the Extracellular side of the membrane. The helical transmembrane segment at 211 to 229 (LIADQLPKRKPSIKVLKSG) threads the bilayer. Over 230–267 (ERVIVDSNITLQNVFMFFYFMINVGSLSLMATTELEYH) the chain is Cytoplasmic. A helical membrane pass occupies residues 268-287 (KGFWAAYLLPFCFFWIAVVT). The Extracellular portion of the chain corresponds to 288-294 (LIFGKKQ). The helical transmembrane segment at 295 to 316 (YIQRPIGDKVIAKSFKVCWILT) threads the bilayer. Residues 317–378 (KNKFDFNAAK…ISSFITQASM (62 aa)) lie on the Cytoplasmic side of the membrane. The chain crosses the membrane as a helical span at residues 379–399 (MELHGIPNDFLQAFDSIALII). The Extracellular segment spans residues 400–412 (FIPIFEKFVYPFI). Residues 413 to 429 (RRYTPLKPITKIFFGFM) traverse the membrane as a helical segment. The Cytoplasmic segment spans residues 430–448 (FGSFAMTWAAVLQSFVYKA). A helical transmembrane segment spans residues 449-466 (GPWYNEPLGHNTPNHVHV). Residues 467–494 (CWQIPAYVLISFSEIFASITGLEYAYSK) are Extracellular-facing. Residues 495 to 513 (APASMKSFIMSIFLLTNAF) traverse the membrane as a helical segment. At 514–526 (GSAIGCALSPVTV) the chain is on the cytoplasmic side. The chain crosses the membrane as a helical span at residues 527-547 (DPKFTWLFTGLAVACFISGCL). The Extracellular portion of the chain corresponds to 548-554 (FWLCFRK). The helical transmembrane segment at 555–577 (YNDTEEEMNAMDYEEEDEFDLNP) threads the bilayer. Residues 578 to 601 (ISAPKANDIEILEPMESLRSTTKY) are Cytoplasmic-facing. Position 594 is a phosphoserine (Ser594).

This sequence belongs to the major facilitator superfamily. Proton-dependent oligopeptide transporter (POT/PTR) (TC 2.A.17) family.

It is found in the membrane. Its function is as follows. Uptake of small peptides. This is Peptide transporter PTR2 (PTR2) from Saccharomyces cerevisiae (strain ATCC 204508 / S288c) (Baker's yeast).